The sequence spans 167 residues: NAD(P)H-quinone oxidoreductase subunit I, chloroplastic (167 aa).

4Fe-4S ferredoxin-type domains lie at 55 to 84 (GRIH…VDWK) and 95 to 124 (LNYS…MTEE). The [4Fe-4S] cluster site is built by Cys64, Cys67, Cys70, Cys74, Cys104, Cys107, Cys110, and Cys114.

The protein belongs to the complex I 23 kDa subunit family. As to quaternary structure, NDH is composed of at least 16 different subunits, 5 of which are encoded in the nucleus. [4Fe-4S] cluster is required as a cofactor.

It is found in the plastid. It localises to the chloroplast thylakoid membrane. The enzyme catalyses a plastoquinone + NADH + (n+1) H(+)(in) = a plastoquinol + NAD(+) + n H(+)(out). It carries out the reaction a plastoquinone + NADPH + (n+1) H(+)(in) = a plastoquinol + NADP(+) + n H(+)(out). In terms of biological role, NDH shuttles electrons from NAD(P)H:plastoquinone, via FMN and iron-sulfur (Fe-S) centers, to quinones in the photosynthetic chain and possibly in a chloroplast respiratory chain. The immediate electron acceptor for the enzyme in this species is believed to be plastoquinone. Couples the redox reaction to proton translocation, and thus conserves the redox energy in a proton gradient. The sequence is that of NAD(P)H-quinone oxidoreductase subunit I, chloroplastic from Eucalyptus globulus subsp. globulus (Tasmanian blue gum).